The sequence spans 78 residues: Small ribosomal subunit protein bS16 (78 aa).

It belongs to the bacterial ribosomal protein bS16 family.

This Maridesulfovibrio salexigens (strain ATCC 14822 / DSM 2638 / NCIMB 8403 / VKM B-1763) (Desulfovibrio salexigens) protein is Small ribosomal subunit protein bS16.